Here is a 193-residue protein sequence, read N- to C-terminus: Penicillin-binding protein activator LpoB (193 aa).

Positions 1–16 (MKKMLFVVAAVFLLAG) are cleaved as a signal peptide. Cysteine 17 is lipidated: N-palmitoyl cysteine. Cysteine 17 is lipidated: S-diacylglycerol cysteine. A disordered region spans residues 23 to 50 (QQPPAPVEPVTPTEPTEPPKPIEPPIEV). Residues 37-46 (PTEPPKPIEP) are compositionally biased toward pro residues.

The protein belongs to the LpoB family. Interacts with PBP1b.

Its subcellular location is the cell outer membrane. Regulator of peptidoglycan synthesis that is essential for the function of penicillin-binding protein 1B (PBP1b). The protein is Penicillin-binding protein activator LpoB of Proteus mirabilis (strain HI4320).